We begin with the raw amino-acid sequence, 363 residues long: 3-dehydroquinate synthase (363 aa).

Residues 72–77, 130–131, Lys-142, and Lys-151 contribute to the NAD(+) site; these read SGEKEK and TT. Glu-184, His-247, and His-264 together coordinate Zn(2+).

Belongs to the sugar phosphate cyclases superfamily. Dehydroquinate synthase family. Co(2+) serves as cofactor. Requires Zn(2+) as cofactor. NAD(+) is required as a cofactor.

It localises to the cytoplasm. It catalyses the reaction 7-phospho-2-dehydro-3-deoxy-D-arabino-heptonate = 3-dehydroquinate + phosphate. It participates in metabolic intermediate biosynthesis; chorismate biosynthesis; chorismate from D-erythrose 4-phosphate and phosphoenolpyruvate: step 2/7. Catalyzes the conversion of 3-deoxy-D-arabino-heptulosonate 7-phosphate (DAHP) to dehydroquinate (DHQ). The chain is 3-dehydroquinate synthase from Bacillus thuringiensis subsp. konkukian (strain 97-27).